Here is a 459-residue protein sequence, read N- to C-terminus: NADH-ubiquinone oxidoreductase chain 4 (459 aa).

The next 12 membrane-spanning stretches (helical) occupy residues 20–42, 61–81, 103–123, 148–168, 194–214, 224–244, 257–277, 284–303, 307–329, 350–370, 392–414, and 435–455; these read PKWLWSATTTHSLIIASLSLTLF, MISTPLIILTCWLLPLMIIAS, LQALLIMAFSATEIILFYIMF, IYFLFYTLAGSLPLLVALLYL, FLWVACVTAFLVKMPLYGVHL, PVAGSMILAAILLKLGGYGMI, LAYPFIILALWGIIMTGSICM, SLIAYSSVSHMGLVASGILI, WGFTGAIILMIAHGLTSSALFCL, IILPLMATWWFIMSLANMALP, TILLTGTGTLITASYSLYLYMSS, and LLLTLHIIPIILLMIKPELIW.

Belongs to the complex I subunit 4 family.

Its subcellular location is the mitochondrion membrane. The enzyme catalyses a ubiquinone + NADH + 5 H(+)(in) = a ubiquinol + NAD(+) + 4 H(+)(out). Functionally, core subunit of the mitochondrial membrane respiratory chain NADH dehydrogenase (Complex I) that is believed to belong to the minimal assembly required for catalysis. Complex I functions in the transfer of electrons from NADH to the respiratory chain. The immediate electron acceptor for the enzyme is believed to be ubiquinone. This is NADH-ubiquinone oxidoreductase chain 4 (MT-ND4) from Polypterus ornatipinnis (Ornate bichir).